The sequence spans 3364 residues: MLRIKEVKKYNNRLGFPAGKEVRIRPLLEAGGFARGPIYVKYGRELSKHDPSSRSMAWNATVFDTALNHPTRPWTVTVVGGKKMVLGVRKEGLGFSEDDPPRSLNVKGGDDMADENYGGGNSTIVLVKSGGKDFAIGLDDLKELNSFGIGAGNGKLSLALGNPVNVLTGVVLPVEQRDGSVAYVAVNSDTKSVIYKVDAKGLQKNQKIDVNVRASAEKILLTKNNELLHISPQGLNVYSVQGSASTFKYFCPYFSSFGGWSRRFVDTVTLMDEGGNQEALIGTGPKGIEYMPVDEKCKNYVVEGVQDAKHAVVAPGATKEGNDIKVLGVYNGELCLLTLEVVDAVEPKLDQGSPAKPSAERVKATKSSKVTVRSGALSKPVSWLRDSLDEASFKNIVDKLSGKIRFSFPLVDLQGRMGLPIKLVVYYDESDGEDMSVLGRHWTLGRDCIVLDHGNTVFEDKQDYYLVKDQMKIRLERDWTKPSANGKVLFNMVGNKDATFEYTAREEKWEVSDGKIRYVYGMNNQGVVSVPGWADWYGPSANYDSKKIHSVQWNLVEISSVAHRDVKLKYTYTPLDPSTHTMHLLSITDDSNKTTIKFSYKTIEGLGKQVSSGLVKEHKFINNKLLEKVEIDSPSTAQVLKLTSTKIDSLYYLESIKQDDDPDPVLGFEYNKDDKLKPRVQQIRLPSKSVVDFKYTKQAIATQQFEQEIAKMADLYTGNEYSLEIEKTVGETDLYVRLKDSAGKNDFIKNQSIRIESYRGFKIKSYSPFMMHSYIAILVRYAEEKEKLHNKIYILNKGEDDSWKLDTTNNNSRVSEDKKFKYDFQEDSFVYYHSKKVHFEYKKSGTKVWSYTSKDIGDVDAFTLMNRGAVYCKNDLVLIRWDALGKLQQETLSDAKSKPSISDVDTFFEYIDVQGTFPEDEAEAKKEVDDYKRDLKESLSDYGLILYNNVVALRTIKLSFTGRITVKVLLYLLKHDYTVSSRSSIELQGGDLAKFNLTLDVFDEHKTKNTNDLDKYRFEFKKQGSKFKLTYIEATDKDNKPTKPSSQNEKLIGQYERRMKIPLDFEKYMMQVNQEGIIVNDHQIIHDNGNFIAKQLDRDTLKLTKFKIPLGAFSNFKKDSDGDEIKLCTKTEQERTESCVSLQTNSARNVSIKYPYYLVTQKKNDIKVLPLKINSRGWEDSVDYRGEILHGSSSHAAMVTTRMSDQKTIVRPLKALNKINKIYAQVISEEKLTTPYDSYVIKYEYEDPVVSMNQVAFKTTIVVPGGGKSATGYYRETNDLQDNQQIVQVMTADNQVFDPEYVKRMNEMQQEEDKQRDGAQLDAEQTITDKSGYHPILKTTPYSANQELVQFLGFEDYEDMTGWTVNRRPIQESNIRRNEFSATGRNFLLLRKGEELIAEFPNTAYYDTFIASTWIRTTQETAVGSTTDMLSLYVDNKPMKGTIKQTIDEWIYVEADSREIAVPESTAVKRVHFKIIVKPTGADDVHVDHVRLSPVNFNFEGSVYDARIGQRTATIQTNGFVSRRLYDAYNRRIAEVDETGNIKYLASYSKRVGNKKDEKKREGGISSRLQMRAKHSWVESFSPYTMEKRWQIGGAATVEPNQAILQGQIISKEKFSSESICIRLVYSMSGSSQLSLTIGKTTVVVKPNAVQYKGHTATTPSNAELVIFATPKLTSIWVDGHLRIEAPETHAKFNNEAVSLQTSGPVGIKDVIVMEDAEIQVSYLNRDSKPLQEILLLDSSNVLIRQMMYDVIGRRVAETVWVQKSLIDGRSTAFKAFQYHDDFVSNDNPTDRNYFLNTGPMQGYVATATNTIYEGYPYSQTVYYNNPLEIRHKVGHPGVKNSIKGAFVHQYAIASDLAFIQRNYPKNEGYRQEEEKSPNGKKHVVVYNRRNKKVAEYTQVKDYNNILTTYIYDQHGNQIQMLPPSYYHEKSRSGDYQPEKQVVASPWAVTSKYDSTGEFITSKETPDGGRVEFIYNEYNQLRYQIHYKEDKQADKIVYFLYNIFGRMCEAGQVPANPTTLQQVRETTKSHQAIPNRDQAVYFDYGETESEPSLRGRIQRTVKKNKEVLFSEVMFFDEESNIIRKSYISPTTNETLSLVYLQENDKVSGIQYPFGVDGKQLILKYKHNLRGEIVEVARVEQKTSGQTEFIPIAGIDHDAEGKVTKISHNYGDSKFDQTYKYVAPGYLVEIANNFLTEKLYYTEKGYGCEPTGDGSILRTEFKASWHDKCDQNLIPLTARAFVSGGIDFTTAETCFDALLNLGYIDTTGRPVKTFYPDLETGLPMKCATPSNWRYISEKMLEQGYPEHYGHAYDYGSHGELIAAKSFVGKEKDSLTAPLSKASFANAGMKSHELDRFWDSLSRSINKVEGTKAIFEGTQQLTTGLVGSVIHKPKLESLLEGKGGDSSICTPWSSGDRTEEAKCKREYQQAFDKLKLKQVIQSLQEPVRKNVLRILKNTLASMLGNSPGDVESFSIDPNGNHGVFYTGFKRFELKYKHQKNQIATIKEGTKQQEKMIVHDDEGNVIKALHKKIDKIEYDPLTQRVSRIEMSDRSRTLEFGYDFRGERTFKRVRNKDNDIISVNYYVRDNKGNVLVEYKQEYPNPKDTNKPINTVTAYIHGPLGLLGFFRNNKYYNVLLDHEGSTRLVIHQGKVVAAYDYLPYGQMIRKYGSNPEAHIAFRYTGQEFDEETGLYNYHARLYDPDIGRFFQMDPMEQYASPYKYAGNSPVSQIDPDGQIAVTLVLMIIGAIVGAYLGAASANNSWNPAKWAWGDKKTWIGLFAGAIMGAFAVYGGAATFSYFTAMFGGSMIAGALATGVISVAGAFLGAAAASNQWNPAKWDWTSPAVWNGLLSGASIAVSFPSGFVGITRSFMSISSNLVKMIYASLMVGGFLLFVYLGGGMANNFNFQISQWDWKSPRTWFGMIEGASTIFMGTAGTAKHGAAKVYNVVKPNGLKMIWHKVNIPSKAFTMRRVKDTIILTWYKNGQSISKQILKTTVKADLAKIPKDFIMIHRGFFMPYQRIGYAAIAMPSMAGLMFKKNQYFFTNHPNGTLTKHVRKKRSAPMSSSAASPSVSNFLNDFFENMSELFDSFFSQTEHSHQDSQSSLSIGASYGRPSNESYHKSFQKLCYSPDSDGNQIICPQRESTVNIFSKGETFAPEAFGQDLFSRCLPLTWHDRPSIACDGEQTTFIYTPNQNIRVFDMVDGWLMLARIAPAALRNLKAGFSFLRDVVFSDEREQTVQVNDLSRCKQDLEVELLDLKRVMLKKQPNEVKWAQPILNDLEDDIGEFLSERKPSEKEFELLQERLSALREEIMENSSVATELNLSTLIGDMLKKMDGVNVGLNGDVRDMISTLSGMVPFSSSNLLA.

2 beta-propeller regions span residues 1 to 344 (MLRI…VVDA) and 705 to 1216 (FEQE…LKAL). Asn-59 is a glycosylation site (N-linked (GlcNAc...) asparagine). Intrachain disulfides connect Cys-251/Cys-297 and Cys-1128/Cys-1139. The rhs/YD-repeats stretch occupies residues 345 to 2733 (VEPKLDQGSP…PVSQIDPDGQ (2389 aa)). The N-linked (GlcNAc...) asparagine glycan is linked to Asn-1149. The carbohydrate-binding module (CBM) stretch occupies residues 1345–1494 (NQELVQFLGF…VHVDHVRLSP (150 aa)). The tract at residues 1575–1715 (HSWVESFSPY…VGIKDVIVME (141 aa)) is lectin carbohydrate-recognition domain (lectin-CRD). Residues 2225–2304 (HDKCDQNLIP…SEKMLEQGYP (80 aa)) are wedge domain. Cystine bridges form between Cys-2253/Cys-2285 and Cys-2407/Cys-2421. Helical transmembrane passes span 2734-2754 (IAVT…LGAA), 2774-2794 (IGLF…AATF), 2805-2825 (MIAG…LGAA), 2844-2864 (WNGL…FVGI), and 2878-2898 (MIYA…GGGM). The tract at residues 3126–3216 (YSPDSDGNQI…ARIAPAALRN (91 aa)) is tox-SGS.

Probably cleaved at the C-terminus. In terms of tissue distribution, female saliva (at protein level). Female salivary gland (at protein level). Not detected in female carcass without salivary glands. Not detected in male tissues.

It localises to the cell membrane. It is found in the secreted. Its function is as follows. (Microbial infection) Facilitates, but is not essential for, invasion of salivary glands by Plasmodium gallinaceum. Plays a role in Plasmodium gallinaceum oocyst development in mosquito midgut. (Microbial infection) Probably facilitates Zika virus replication in salivary glands. This is Salivary gland surface protein 1 from Aedes aegypti (Yellowfever mosquito).